A 466-amino-acid polypeptide reads, in one-letter code: MATVDAILAAKYPAKAHARRVAERLQPHQDGRPGIIYLEAQKTRLIEDNDEPVPFRQRRPFFYLSGCLLPDSSLVYDITEDKLTLFIPPVDPEDVIWSGLPLSTDEALQQYDVDRVSITTEVNSTLASIASAHGGRAVAYNIADQVSPETKFDGFSEINKSVLKGAIEQSRVVKDEYEIALIRKANDISTKAHVAAIKASIIAENEREIEGAFIATCIANGAREQAYHPIVACGENGATLHYGRNSDALIDPVTKKKKRNVLIDAGGEYRTYCSDITRVFPLGGGFTTETRQIYEIVLQMQVECIEMLRDGVQWEEVHAHAHHVAIRGLLELGILRGSEDEIFEKRVSVAFFPHGLGHYLGMDTHDTGGNPNYADKDTMFRYLRVRGRLPAGSVITVEPGIYFCRFIIEPYLKSSESSKYIDTDVLERYWSVGGVRIEDNVLVTKDGYDNLTTTPKTVEEIESLAA.

Positions 264, 275, 398, and 438 each coordinate Mn(2+).

It belongs to the peptidase M24B family. Mn(2+) serves as cofactor.

It catalyses the reaction Release of any N-terminal amino acid, including proline, that is linked to proline, even from a dipeptide or tripeptide.. Catalyzes the removal of a penultimate prolyl residue from the N-termini of peptides. The chain is Probable Xaa-Pro aminopeptidase pepP (pepP) from Aspergillus clavatus (strain ATCC 1007 / CBS 513.65 / DSM 816 / NCTC 3887 / NRRL 1 / QM 1276 / 107).